Consider the following 318-residue polypeptide: Coproporphyrin III ferrochelatase (318 aa).

Fe(2+) is bound by residues H186 and E268.

The protein belongs to the ferrochelatase family.

It is found in the cytoplasm. It carries out the reaction Fe-coproporphyrin III + 2 H(+) = coproporphyrin III + Fe(2+). It participates in porphyrin-containing compound metabolism; protoheme biosynthesis. In terms of biological role, involved in coproporphyrin-dependent heme b biosynthesis. Catalyzes the insertion of ferrous iron into coproporphyrin III to form Fe-coproporphyrin III. The protein is Coproporphyrin III ferrochelatase of Lactococcus lactis subsp. cremoris (strain MG1363).